A 522-amino-acid polypeptide reads, in one-letter code: E3 ubiquitin-protein ligase TRIM65 (522 aa).

The residue at position 2 (A2) is an N-acetylalanine. Residues 13 to 52 (CSICLGRYRDPVTLPCGHSFCGNCIQDSWRSCEKSCPECR) form an RING-type zinc finger. Residues 92-134 (SHSARCLRHGRPLEFFCRTEGLCVCSACTVHDCSHHERALLDV) form a B box-type zinc finger. Residues 141–229 (DQLRARVLVT…QRLTDHLRAL (89 aa)) adopt a coiled-coil conformation. A Phosphoserine modification is found at S187. In terms of domain architecture, B30.2/SPRY spans 316-509 (APVPSAVCPL…LTLCHQPEAT (194 aa)).

Belongs to the TRIM/RBCC family. Homo-multimerizes. Interacts with ARRDC4.

It is found in the cytoplasm. The enzyme catalyses S-ubiquitinyl-[E2 ubiquitin-conjugating enzyme]-L-cysteine + [acceptor protein]-L-lysine = [E2 ubiquitin-conjugating enzyme]-L-cysteine + N(6)-ubiquitinyl-[acceptor protein]-L-lysine.. The protein operates within protein modification; protein ubiquitination. Functionally, E3 ubiquitin ligase that plays a role in several processes including innate immnity, autophagy or inflammation. Negatively regulates miRNAs by modulating the ubiquitination and stability of TNRC6A, a protein involved in RNA-mediated gene silencing by both micro-RNAs (miRNAs) and short interfering RNAs. This ubiquitination results in the suppressed expression of miR-138-5p leading to increased autophagy. Upon enteroviral infection, promotes 'Lys-63'-mediated ubiquitination activation of IFIH1/MDA5 leading to innate signaling cascade. Mechanistically, selectively recognizes MDA5 filaments that occur on dsRNAs. Also plays a role in limitation of inflammation through different mechanisms. First, promotes 'Lys-48'-mediated ubiquitination of VCAM1 leading to its degradation and limitation of LPS-induced lung inflammation. In addition, negatively regulates inflammasome activation by promoting 'lys48'-linked ubiquitination of NLRP3 which is critical for the inhibition of NLRP3 inflammasome activation in resting macrophages. This is E3 ubiquitin-protein ligase TRIM65 (Trim65) from Mus musculus (Mouse).